Consider the following 490-residue polypeptide: Protein Mdm4 (490 aa).

The SWIB/MDM2 domain occupies 25-108; the sequence is NQVRPKLPLL…YDMLRKNLVT (84 aa). Residues 129-160 form a disordered region; that stretch reads DIPSQDQLKQSAEESSTSRKRTTEDDIPTLPT. Residues 130-143 show a composition bias toward polar residues; that stretch reads IPSQDQLKQSAEES. A region II region spans residues 246–332; that stretch reads SEQLGVGIKV…CWALRKDWYS (87 aa). The segment at 300–329 adopts a RanBP2-type zinc-finger fold; that stretch reads SEDEWQCTECKKFNSPSKRYCFRCWALRKD. Residue S342 is modified to Phosphoserine; by CHEK2. S367 is subject to Phosphoserine; by CHEK1 and CHEK2. A necessary for interaction with USP2 region spans residues 393–490; it reads EFLDLAHSSE…IQLVIKVFIA (98 aa). The RING-type zinc finger occupies 437-478; it reads CSLCEKRPRDGNIIHGRTGHLVTCFHCARRLKKAGASCPICK. The Nuclear localization signal motif lies at 442 to 445; the sequence is KRPR.

It belongs to the MDM2/MDM4 family. In terms of assembly, interacts with MDM2. Interacts with TP53, TP73 and USP2. Found in a trimeric complex with USP2, MDM2 and MDM4. Interacts (phosphorylated) with YWHAG; negatively regulates MDM4 activity toward TP53. Phosphorylated. Phosphorylation at Ser-367 promotes interaction with YWHAG and subsequent ubiquitination and degradation. Phosphorylation at Ser-342 also induces ubiquitination and degradation but to a lower extent. In terms of processing, ubiquitinated and degraded by MDM2. Deubiquitination by USP2 on the other hand stabilizes the MDM4 protein. As to expression, expressed in all tissues tested with high levels in thymus.

The protein localises to the nucleus. Along with MDM2, contributes to TP53 regulation. Inhibits p53/TP53- and TP73/p73-mediated cell cycle arrest and apoptosis by binding its transcriptional activation domain. Inhibits degradation of MDM2. Can reverse MDM2-targeted degradation of TP53 while maintaining suppression of TP53 transactivation and apoptotic functions. The polypeptide is Protein Mdm4 (MDM4) (Homo sapiens (Human)).